Consider the following 78-residue polypeptide: Small ribosomal subunit protein bS18 (78 aa).

The protein belongs to the bacterial ribosomal protein bS18 family. Part of the 30S ribosomal subunit. Forms a tight heterodimer with protein bS6.

In terms of biological role, binds as a heterodimer with protein bS6 to the central domain of the 16S rRNA, where it helps stabilize the platform of the 30S subunit. The sequence is that of Small ribosomal subunit protein bS18 from Kocuria rhizophila (strain ATCC 9341 / DSM 348 / NBRC 103217 / DC2201).